Reading from the N-terminus, the 41-residue chain is U-theraphotoxin-Lk1a (41 aa).

3 disulfide bridges follow: cysteine 1–cysteine 16, cysteine 8–cysteine 21, and cysteine 15–cysteine 36.

Belongs to the neurotoxin 14 (magi-1) family. 08 (Ltx-4) subfamily. In terms of tissue distribution, expressed by the venom gland.

Its subcellular location is the secreted. In terms of biological role, toxin that causes irreversible contractile paralysis in adult Aedes aegypti resulting in 100% mortality after 24 hours. In Lasiodora klugi (Bahia scarlet tarantula), this protein is U-theraphotoxin-Lk1a.